The chain runs to 1370 residues: Putative Polycomb group protein ASXL2 (1370 aa).

An HTH HARE-type domain is found at 11–86; that stretch reads RTWAEAAKTV…RMGVYTLKKD (76 aa). A disordered region spans residues 92-216; that stretch reads KELSECSEES…DSVPAKPGQM (125 aa). Residues 103–120 are compositionally biased toward low complexity; that stretch reads DGQSDSHSSDNSSSSDGG. Residues 141 to 152 show a composition bias toward pro residues; that stretch reads PPSPPSGCPSPT. S150 is modified (phosphoserine). The Nuclear localization signal motif lies at 178–182; that stretch reads QQKKK. The span at 186–198 shows a compositional bias: polar residues; it reads CRPSMSISNQHLS. The DEUBAD domain maps to 229–338; sequence PDSILVNTNL…FENYYGQSSG (110 aa). Residues 258-262 carry the LXXLL motif motif; sequence LLLLL. Disordered regions lie at residues 340–487 and 516–535; these read SLED…AGLQ and QESL…SSWE. The span at 398–412 shows a compositional bias: basic and acidic residues; it reads QKEENQDEARPDSKS. S477, S524, S553, and S590 each carry phosphoserine. R594 carries the post-translational modification Asymmetric dimethylarginine. At S601 the chain carries Phosphoserine. Over residues 643–652 the composition is skewed to gly residues; the sequence is IPGPGPGGGQ. 3 disordered regions span residues 643 to 734, 805 to 891, and 1103 to 1175; these read IPGP…LASS, PKAG…SSIP, and GHAD…VSEQ. 2 stretches are compositionally biased toward polar residues: residues 719 to 734 and 830 to 839; these read AQLQ…LASS and MTSSPVTTAS. Positions 849–870 are enriched in low complexity; sequence SGTATSTGSAPSSSTLPAASSL. The span at 871–891 shows a compositional bias: polar residues; that stretch reads KTPGTSANMNGPISRTSSSIP. The segment covering 1119 to 1131 has biased composition (acidic residues); sequence DESDEDRVGDEQE. Phosphoserine occurs at positions 1121 and 1254. A PHD-type; atypical zinc finger spans residues 1332–1369; it reads PSKCYCRLKAMIMCKGCGAFCHDDCIGPSKLCVSCLVV.

The protein belongs to the Asx family. Core component of the polycomb repressive deubiquitinase (PR-DUB) complex, at least composed of BAP1, one of ASXL1, ASXL2 or (probably) ASXL3, and one of MBD5 or MBD6. Distinct combinations of ASXL and MBD proteins may preferentially bind specific histone modification marks. The PR-DUB core associates with a number of accessory proteins, including FOXK1, FOXK2, KDM1B, HCFC1 and OGT; KDM1B specifically associates with ASXL2 PR-DUB complexes. Interacts (via PHD domain) with MBD5 and MBD6 (via MBD domain); the interaction is probably direct and mediates association of MBD proteins with the PR-DUB core. Interacts with PPARA and PPARG.

It localises to the nucleus. In terms of biological role, putative Polycomb group (PcG) protein. PcG proteins act by forming multiprotein complexes, which are required to maintain the transcriptionally repressive state of homeotic genes throughout development. PcG proteins are not required to initiate repression, but to maintain it during later stages of development. They probably act via methylation of histones, rendering chromatin heritably changed in its expressibility. Involved in transcriptional regulation mediated by ligand-bound nuclear hormone receptors, such as peroxisome proliferator-activated receptor gamma (PPARG). Acts as a coactivator for PPARG and enhances its adipocyte differentiation-inducing activity; the function seems to involve differential recruitment of acetylated and methylated histone H3. Non-catalytic component of the PR-DUB complex, a complex that specifically mediates deubiquitination of histone H2A monoubiquitinated at 'Lys-119' (H2AK119ub1). The PR-DUB complex is an epigenetic regulator of gene expression and acts as a transcriptional coactivator, affecting genes involved in development, cell communication, signaling, cell proliferation and cell viability. ASXL1, ASXL2 and ASXL3 function redundantly in the PR-DUB complex. The ASXL proteins are essential for chromatin recruitment and transcriptional activation of associated genes. ASXL1 and ASXL2 are important for BAP1 protein stability. This is Putative Polycomb group protein ASXL2 (Asxl2) from Mus musculus (Mouse).